Reading from the N-terminus, the 81-residue chain is Large ribosomal subunit protein bL27m (81 aa).

Polar residues predominate over residues 1–11; the sequence is MATKKSGGSSR. Residues 1–20 are disordered; the sequence is MATKKSGGSSRNGRDSKGRR.

Belongs to the bacterial ribosomal protein bL27 family.

Its subcellular location is the mitochondrion. The sequence is that of Large ribosomal subunit protein bL27m (RPL27) from Reclinomonas americana.